A 113-amino-acid polypeptide reads, in one-letter code: Large ribosomal subunit protein uL22 (113 aa).

Belongs to the universal ribosomal protein uL22 family. As to quaternary structure, part of the 50S ribosomal subunit.

This protein binds specifically to 23S rRNA; its binding is stimulated by other ribosomal proteins, e.g. L4, L17, and L20. It is important during the early stages of 50S assembly. It makes multiple contacts with different domains of the 23S rRNA in the assembled 50S subunit and ribosome. Its function is as follows. The globular domain of the protein is located near the polypeptide exit tunnel on the outside of the subunit, while an extended beta-hairpin is found that lines the wall of the exit tunnel in the center of the 70S ribosome. The chain is Large ribosomal subunit protein uL22 from Xanthomonas oryzae pv. oryzae (strain MAFF 311018).